The chain runs to 44 residues: Alpha-amylase inhibitor helianthamide (44 aa).

Cystine bridges form between cysteine 6/cysteine 38, cysteine 16/cysteine 33, and cysteine 20/cysteine 39. Residues 7 to 10 (YIYH) are inhibitory motif.

The protein belongs to the sea anemone alpha-amylase inhibitor family.

The protein localises to the secreted. Specific pancreatic alpha-amylase (AMY2A) inhibitor. The recombinant peptide inhibits human pancreatic (Ki=0.01 nM) and porcine pancreatic alpha-amylases (Ki=0.1 nM). In Stichodactyla helianthus (Sun anemone), this protein is Alpha-amylase inhibitor helianthamide.